The chain runs to 533 residues: 2-isopropylmalate synthase (533 aa).

The Pyruvate carboxyltransferase domain maps to 8–270 (VIIFDTTLRD…YFNPFLGRPA (263 aa)). 4 residues coordinate Mn(2+): Asp-17, His-209, His-211, and Asn-245. Residues 409 to 533 (RLELVQVSCG…KEKTPEMLQV (125 aa)) are regulatory domain.

The protein belongs to the alpha-IPM synthase/homocitrate synthase family. LeuA type 1 subfamily. Homodimer. The cofactor is Mn(2+).

The protein localises to the cytoplasm. The enzyme catalyses 3-methyl-2-oxobutanoate + acetyl-CoA + H2O = (2S)-2-isopropylmalate + CoA + H(+). The protein operates within amino-acid biosynthesis; L-leucine biosynthesis; L-leucine from 3-methyl-2-oxobutanoate: step 1/4. In terms of biological role, catalyzes the condensation of the acetyl group of acetyl-CoA with 3-methyl-2-oxobutanoate (2-ketoisovalerate) to form 3-carboxy-3-hydroxy-4-methylpentanoate (2-isopropylmalate). The protein is 2-isopropylmalate synthase of Microcystis aeruginosa.